Here is a 130-residue protein sequence, read N- to C-terminus: Small ribosomal subunit protein eS17 (130 aa).

Belongs to the eukaryotic ribosomal protein eS17 family.

The protein is Small ribosomal subunit protein eS17 (RPS17) of Theileria parva (East coast fever infection agent).